The sequence spans 95 residues: Small ribosomal subunit protein bS18 (95 aa).

This sequence belongs to the bacterial ribosomal protein bS18 family. Part of the 30S ribosomal subunit. Forms a tight heterodimer with protein bS6.

In terms of biological role, binds as a heterodimer with protein bS6 to the central domain of the 16S rRNA, where it helps stabilize the platform of the 30S subunit. This Rickettsia massiliae (strain Mtu5) protein is Small ribosomal subunit protein bS18.